A 241-amino-acid chain; its full sequence is Small ribosomal subunit protein uS3 (241 aa).

The KH type-2 domain occupies 39-109 (IRQYITKNLS…QIRINVIEVQ (71 aa)). The segment at 214–241 (EEIPMPVPSQTPRRQRRRQQFEDRSGEE) is disordered. Positions 232–241 (QQFEDRSGEE) are enriched in basic and acidic residues.

The protein belongs to the universal ribosomal protein uS3 family. As to quaternary structure, part of the 30S ribosomal subunit. Forms a tight complex with proteins S10 and S14.

Binds the lower part of the 30S subunit head. Binds mRNA in the 70S ribosome, positioning it for translation. This Rippkaea orientalis (strain PCC 8801 / RF-1) (Cyanothece sp. (strain PCC 8801)) protein is Small ribosomal subunit protein uS3.